Reading from the N-terminus, the 119-residue chain is Large ribosomal subunit protein uL24 (119 aa).

This sequence belongs to the universal ribosomal protein uL24 family. As to quaternary structure, part of the 50S ribosomal subunit.

Functionally, one of two assembly initiator proteins, it binds directly to the 5'-end of the 23S rRNA, where it nucleates assembly of the 50S subunit. One of the proteins that surrounds the polypeptide exit tunnel on the outside of the subunit. The protein is Large ribosomal subunit protein uL24 of Leptospira interrogans serogroup Icterohaemorrhagiae serovar copenhageni (strain Fiocruz L1-130).